A 505-amino-acid chain; its full sequence is Cyclic AMP-dependent transcription factor ATF-2 (505 aa).

Residues 1 to 7 carry the Nuclear export signal 1 (N-NES) motif; sequence MKFKLHV. A C2H2-type zinc finger spans residues 25-49; that stretch reads FLCTAPGCGQRFTNEDHLAVHKHKH. T52 carries the post-translational modification Phosphothreonine; by PKC/PRKCH. S62 carries the phosphoserine; by VRK1 modification. At T69 the chain carries Phosphothreonine; by MAPK11 and MAPK14. T71 is subject to Phosphothreonine; by MAPK1, MAPK3, MAPK11, MAPK12, MAPK14 and PLK3. T73 carries the post-translational modification Phosphothreonine; by VRK1. S90 and S112 each carry phosphoserine. Position 116 is a phosphothreonine (T116). S121 is subject to Phosphoserine; by PKC/PRKCA and PKC/PRKCB. Disordered regions lie at residues 125–155 and 259–373; these read EPSVVETTHQDSPLPHPESTTSDEKEVPLAQ and PGIP…RQKR. S136 is subject to Phosphoserine. Over residues 282–293 the composition is skewed to polar residues; sequence LTQQHPPVTNGD. Residues 296 to 299 form an essential for its histone acetyltransferase activity region; it reads KGHG. A compositionally biased stretch (low complexity) spans 318–334; it reads PATSTTETPASPAHTTP. S328 bears the Phosphoserine mark. At S340 the chain carries Phosphoserine; by PKC/PRKCA and PKC/PRKCB. Over residues 346–363 the composition is skewed to basic and acidic residues; sequence AANEDPDEKRRKFLERNR. Residues 352 to 415 enclose the bZIP domain; the sequence is DEKRRKFLER…AQLKQLLLAH (64 aa). Positions 354-374 are basic motif; that stretch reads KRRKFLERNRAAASRCRQKRK. K357 carries the N6-acetyllysine modification. Residue S367 is modified to Phosphoserine; by PKC/PRKCA and PKC/PRKCB. K374 is subject to N6-acetyllysine. Residues 380 to 408 are leucine-zipper; sequence LEKKAEDLSSLNGQLQSEVTLLRNEVAQL. The short motif at 405–414 is the Nuclear export signal 2 (C-NES) element; the sequence is VAQLKQLLLA. The disordered stretch occupies residues 425–472; sequence KKSGYHTADKDDSSEDISVPSSPHTEAIQHSSVSTSNGVSSTSKAEAV. Phosphoserine is present on residues S442 and S446. Polar residues predominate over residues 443-454; sequence VPSSPHTEAIQH. Positions 455-467 are enriched in low complexity; it reads SSVSTSNGVSSTS. Phosphoserine; by ATM is present on residues S490 and S498.

Belongs to the bZIP family. ATF subfamily. In terms of assembly, binds DNA as a dimer and can form a homodimer in the absence of DNA. Can form a heterodimer with JUN. Heterodimerization is essential for its transcriptional activity. Interacts with SMAD3 and SMAD4. Binds through its N-terminal region to UTF1 which acts as a coactivator of ATF2 transcriptional activity. Interacts with the HK1/VDAC1 complex. Interacts with NBN, MRE11, XPO1, KAT5 and CUL3. In terms of processing, phosphorylation of Thr-69 by MAPK14 and MAPK11, and at Thr-71 by MAPK1/ERK2, MAPK3/ERK1, MAPK11, MAPK12 and MAPK14 in response to external stimulus like insulin causes increased transcriptional activity. Phosphorylated by PLK3 following hyperosmotic stress. Also phosphorylated and activated by JNK and CaMK4. ATM-mediated phosphorylation at Ser-490 and Ser-498 stimulates its function in DNA damage response. Phosphorylation at Ser-62, Thr-73 and Ser-121 activates its transcriptional activity. Phosphorylation at Thr-69 or Thr-71 enhances acetylation of histones H2B and H4. Ubiquitously expressed, with more abundant expression in the brain.

It is found in the nucleus. Its subcellular location is the cytoplasm. The protein resides in the mitochondrion outer membrane. In terms of biological role, transcriptional activator which regulates the transcription of various genes, including those involved in anti-apoptosis, cell growth, and DNA damage response. Dependent on its binding partner, binds to CRE (cAMP response element) consensus sequences (5'-TGACGTCA-3') or to AP-1 (activator protein 1) consensus sequences (5'-TGACTCA-3'). In the nucleus, contributes to global transcription and the DNA damage response, in addition to specific transcriptional activities that are related to cell development, proliferation and death. In the cytoplasm, interacts with and perturbs HK1- and VDAC1-containing complexes at the mitochondrial outer membrane, thereby impairing mitochondrial membrane potential, inducing mitochondrial leakage and promoting cell death. The phosphorylated form (mediated by ATM) plays a role in the DNA damage response and is involved in the ionizing radiation (IR)-induced S phase checkpoint control and in the recruitment of the MRN complex into the IR-induced foci (IRIF). Exhibits histone acetyltransferase (HAT) activity which specifically acetylates histones H2B and H4 in vitro. In concert with CUL3 and RBX1, promotes the degradation of KAT5 thereby attenuating its ability to acetylate and activate ATM. Can elicit oncogenic or tumor suppressor activities depending on the tissue or cell type. The protein is Cyclic AMP-dependent transcription factor ATF-2 (ATF2) of Homo sapiens (Human).